A 151-amino-acid chain; its full sequence is UPF0178 protein Ping_0754 (151 aa).

It belongs to the UPF0178 family.

This is UPF0178 protein Ping_0754 from Psychromonas ingrahamii (strain DSM 17664 / CCUG 51855 / 37).